The primary structure comprises 177 residues: Shikimate kinase (177 aa).

Position 17–22 (17–22) interacts with ATP; that stretch reads GAGKST. Residue S21 participates in Mg(2+) binding. 3 residues coordinate substrate: D39, R63, and G85. ATP is bound at residue R123. R142 lines the substrate pocket. R160 is a binding site for ATP.

The protein belongs to the shikimate kinase family. Monomer. It depends on Mg(2+) as a cofactor.

The protein localises to the cytoplasm. The enzyme catalyses shikimate + ATP = 3-phosphoshikimate + ADP + H(+). It participates in metabolic intermediate biosynthesis; chorismate biosynthesis; chorismate from D-erythrose 4-phosphate and phosphoenolpyruvate: step 5/7. In terms of biological role, catalyzes the specific phosphorylation of the 3-hydroxyl group of shikimic acid using ATP as a cosubstrate. In Halorhodospira halophila (strain DSM 244 / SL1) (Ectothiorhodospira halophila (strain DSM 244 / SL1)), this protein is Shikimate kinase.